We begin with the raw amino-acid sequence, 521 residues long: MTTRLLQLTRPHYRLLSLPLQKPFNIKRQMSAANPSPFGNYLNTITKSLQQNLQTCFHFQAKEIDIIESPSQFYDLLKTKILNSQNRIFIASLYLGKSETELVDCISQALTKNPKLKVSFLLDGLRGTRELPSACSATLLSSLVAKYGSERVDCRLYKTPAYHGWKKVLVPKRFNEGLGLQHMKIYGFDNEVILSGANLSNDYFTNRQDRYYLFKSRNFSNYYFKLHQLISSFSYQIIKPMVDGSINIIWPDSNPTVEPTKNKRLFLREASQLLDGFLKSSKQSLPITAVGQFSTLVYPISQFTPLFPKYNDKSTEKRTILSLLSTITSNAISWTFTAGYFNILPDIKAKLLATPVAEANVITASPFANGFYQSKGVSSNLPGAYLYLSKKFLQDVCRYRQDHAITLREWQRGVVNKPNGWSYHAKGIWLSARDKNDANNWKPFITVIGSSNYTRRAYSLDLESNALIITRDEELRKKMKAELDNLLQYTKPVTLEDFQSDPERHVGTGVKIATSILGKKL.

91–98 (ASLYLGKS) provides a ligand contact to ATP. PLD phosphodiesterase domains are found at residues 177–203 (GLGLQHMKIYGFDNEVILSGANLSNDY) and 419–457 (NGWSYHAKGIWLSARDKNDANNWKPFITVIGSSNYTRRA). Residues His-182, Lys-184, and Asp-189 contribute to the active site.

It belongs to the CDP-alcohol phosphatidyltransferase class-II family.

It is found in the mitochondrion. The catalysed reaction is a CDP-1,2-diacyl-sn-glycerol + sn-glycerol 3-phosphate = a 1,2-diacyl-sn-glycero-3-phospho-(1'-sn-glycero-3'-phosphate) + CMP + H(+). Its pathway is phospholipid metabolism; phosphatidylglycerol biosynthesis; phosphatidylglycerol from CDP-diacylglycerol: step 1/2. In terms of biological role, essential for the viability of mitochondrial petite mutant. Catalyzes the committed step to the synthesis of the acidic phospholipids. The protein is CDP-diacylglycerol--glycerol-3-phosphate 3-phosphatidyltransferase (PGS1) of Saccharomyces cerevisiae (strain ATCC 204508 / S288c) (Baker's yeast).